The following is a 191-amino-acid chain: Guanylate kinase (191 aa).

A Guanylate kinase-like domain is found at 9-187 (GQLIVITGPS…SLIALETAIF (179 aa)). Position 16–23 (16–23 (GPSGVGKG)) interacts with ATP.

The protein belongs to the guanylate kinase family.

It is found in the cytoplasm. It catalyses the reaction GMP + ATP = GDP + ADP. In terms of biological role, essential for recycling GMP and indirectly, cGMP. In Thermosynechococcus vestitus (strain NIES-2133 / IAM M-273 / BP-1), this protein is Guanylate kinase.